The sequence spans 398 residues: Protein CDKN2AIP homolog A (398 aa).

Residues 19-124 form the XRN2-binding (XTBD) domain; it reads LELVHGECES…KVKKRGISSS (106 aa). Residues 118 to 245 are disordered; that stretch reads KRGISSSNEG…SDNALKPTRR (128 aa). Residues 131–147 show a composition bias toward basic and acidic residues; the sequence is EPCKKQKSSDHGERESS. Composition is skewed to polar residues over residues 154–163, 189–199, and 226–238; these read SDGNVPSTSL, RRSLPVSNAKS, and QTSM…SSDN.

This sequence belongs to the CARF family.

The protein resides in the nucleus. It is found in the nucleoplasm. Functionally, may regulate DNA damage response and cell proliferation. This Xenopus laevis (African clawed frog) protein is Protein CDKN2AIP homolog A (cdkn2aip-a).